Reading from the N-terminus, the 327-residue chain is MSHLAELVASAKAAISQASDVAALDNVRVEYLGKKGHLTLQMTTLRELPPEERPAAGAVINEAKEQVQQALNARKAELESAALNARLAAETIDVSLPGRRIENGGLHPVTRTIDRIESFFGELGFTVATGPEIEDDYHNFDALNIPGHHPARADHDTFWFDATRLLRTQTSGVQIRTMKAQQPPIRIIAPGRVYRNDYDQTHTPMFHQMEGLIVDTNISFTNLKGTLHDFLRNFFEEDLQIRFRPSYFPFTEPSAEVDVMGKNGKWLEVLGCGMVHPNVLRNVGIDPEVYSGFAFGMGMERLTMLRYGVTDLRSFFENDLRFLKQFK.

Glutamate 252 lines the Mg(2+) pocket.

Belongs to the class-II aminoacyl-tRNA synthetase family. Phe-tRNA synthetase alpha subunit type 1 subfamily. In terms of assembly, tetramer of two alpha and two beta subunits. Mg(2+) is required as a cofactor.

Its subcellular location is the cytoplasm. The catalysed reaction is tRNA(Phe) + L-phenylalanine + ATP = L-phenylalanyl-tRNA(Phe) + AMP + diphosphate + H(+). The polypeptide is Phenylalanine--tRNA ligase alpha subunit (Escherichia coli O127:H6 (strain E2348/69 / EPEC)).